Consider the following 114-residue polypeptide: MTIRLLCYVGFYFLGAGLMEADIYQTPRYLVIGTGKKITLECSQTMGHDKMYWYQQDPGMELHLIHYSYGVNSTEKGDLSSESTVSRIRTEHFPLTLESARPSHTSQYLCASSE.

The first 21 residues, 1–21 (MTIRLLCYVGFYFLGAGLMEA), serve as a signal peptide directing secretion. The Ig-like domain maps to 22-114 (DIYQTPRYLV…TSQYLCASSE (93 aa)). Residues C42 and C110 are joined by a disulfide bond. N72 is a glycosylation site (N-linked (GlcNAc...) asparagine).

Alpha-beta TR is a heterodimer composed of an alpha and beta chain; disulfide-linked. The alpha-beta TR is associated with the transmembrane signaling CD3 coreceptor proteins to form the TR-CD3 (TcR or TCR). The assembly of alpha-beta TR heterodimers with CD3 occurs in the endoplasmic reticulum where a single alpha-beta TR heterodimer associates with one CD3D-CD3E heterodimer, one CD3G-CD3E heterodimer and one CD247 homodimer forming a stable octameric structure. CD3D-CD3E and CD3G-CD3E heterodimers preferentially associate with TR alpha and TR beta chains, respectively. The association of the CD247 homodimer is the last step of TcR assembly in the endoplasmic reticulum and is required for transport to the cell surface.

It is found in the cell membrane. V region of the variable domain of T cell receptor (TR) beta chain that participates in the antigen recognition. Alpha-beta T cell receptors are antigen specific receptors which are essential to the immune response and are present on the cell surface of T lymphocytes. Recognize peptide-major histocompatibility (MH) (pMH) complexes that are displayed by antigen presenting cells (APC), a prerequisite for efficient T cell adaptive immunity against pathogens. Binding of alpha-beta TR to pMH complex initiates TR-CD3 clustering on the cell surface and intracellular activation of LCK that phosphorylates the ITAM motifs of CD3G, CD3D, CD3E and CD247 enabling the recruitment of ZAP70. In turn ZAP70 phosphorylates LAT, which recruits numerous signaling molecules to form the LAT signalosome. The LAT signalosome propagates signal branching to three major signaling pathways, the calcium, the mitogen-activated protein kinase (MAPK) kinase and the nuclear factor NF-kappa-B (NF-kB) pathways, leading to the mobilization of transcription factors that are critical for gene expression and essential for T cell growth and differentiation. The T cell repertoire is generated in the thymus, by V-(D)-J rearrangement. This repertoire is then shaped by intrathymic selection events to generate a peripheral T cell pool of self-MH restricted, non-autoaggressive T cells. Post-thymic interaction of alpha-beta TR with the pMH complexes shapes TR structural and functional avidity. The polypeptide is T cell receptor beta variable 25-1 (Homo sapiens (Human)).